The chain runs to 245 residues: MPTTNIKELLEAGAHFGHQTSRWHPRMKKYIFTKRNGIHIIDLEKTVVMLDKACNYINQVVSDGGKVLFVGTKKQAQEILAEEAKRCGMYFINQRWTGGILTNFHSIQSRIDYLVRLEDQQARGDFSRLPKKEAQKLGEEIARLNRTMGGFKEMTRLPDVIFVVDPIKEKIAMAEAKRMGVPLVAMVDTNCNPDEVDYPVPSNDDAMRAIKLICSKMADAVIEAQNAMKVTEVETTGEAQAETAG.

The protein belongs to the universal ribosomal protein uS2 family.

The sequence is that of Small ribosomal subunit protein uS2 from Dehalococcoides mccartyi (strain CBDB1).